Consider the following 1055-residue polypeptide: Putative helicase/primase complex protein (1055 aa).

It belongs to the asfivirus F1055L family.

In terms of biological role, may be involved in DNA replication. The chain is Putative helicase/primase complex protein from Ornithodoros (relapsing fever ticks).